A 458-amino-acid chain; its full sequence is Cytoplasmic tRNA 2-thiolation protein 2 (458 aa).

The protein belongs to the CTU2/NCS2 family.

It localises to the cytoplasm. The protein operates within tRNA modification; 5-methoxycarbonylmethyl-2-thiouridine-tRNA biosynthesis. Its function is as follows. Plays a central role in 2-thiolation of mcm(5)S(2)U at tRNA wobble positions of tRNA(Lys), tRNA(Glu) and tRNA(Gln). May act by forming a heterodimer with NCS6/CTU1 that ligates sulfur from thiocarboxylated URM1 onto the uridine of tRNAs at wobble position. This chain is Cytoplasmic tRNA 2-thiolation protein 2, found in Arabidopsis thaliana (Mouse-ear cress).